A 228-amino-acid polypeptide reads, in one-letter code: RNA-free ribonuclease P (228 aa).

The protein belongs to the HARP family.

It carries out the reaction Endonucleolytic cleavage of RNA, removing 5'-extranucleotides from tRNA precursor.. Functionally, RNA-free RNase P that catalyzes the removal of the 5'-leader sequence from pre-tRNA to produce the mature 5'-terminus. This Methanopyrus kandleri (strain AV19 / DSM 6324 / JCM 9639 / NBRC 100938) protein is RNA-free ribonuclease P.